Reading from the N-terminus, the 401-residue chain is tRNA N6-adenosine threonylcarbamoyltransferase (401 aa).

Fe cation contacts are provided by H111 and H115. Substrate is bound by residues 191–195 (LASGG), D223, G236, and N336. D364 contributes to the Fe cation binding site.

This sequence belongs to the KAE1 / TsaD family. Fe(2+) serves as cofactor.

It localises to the cytoplasm. The catalysed reaction is L-threonylcarbamoyladenylate + adenosine(37) in tRNA = N(6)-L-threonylcarbamoyladenosine(37) in tRNA + AMP + H(+). Functionally, required for the formation of a threonylcarbamoyl group on adenosine at position 37 (t(6)A37) in tRNAs that read codons beginning with adenine. Is involved in the transfer of the threonylcarbamoyl moiety of threonylcarbamoyl-AMP (TC-AMP) to the N6 group of A37, together with TsaE and TsaB. TsaD likely plays a direct catalytic role in this reaction. The chain is tRNA N6-adenosine threonylcarbamoyltransferase from Tropheryma whipplei (strain TW08/27) (Whipple's bacillus).